Reading from the N-terminus, the 236-residue chain is Leucyl/phenylalanyl-tRNA--protein transferase (236 aa).

Belongs to the L/F-transferase family.

The protein localises to the cytoplasm. The catalysed reaction is N-terminal L-lysyl-[protein] + L-leucyl-tRNA(Leu) = N-terminal L-leucyl-L-lysyl-[protein] + tRNA(Leu) + H(+). It carries out the reaction N-terminal L-arginyl-[protein] + L-leucyl-tRNA(Leu) = N-terminal L-leucyl-L-arginyl-[protein] + tRNA(Leu) + H(+). The enzyme catalyses L-phenylalanyl-tRNA(Phe) + an N-terminal L-alpha-aminoacyl-[protein] = an N-terminal L-phenylalanyl-L-alpha-aminoacyl-[protein] + tRNA(Phe). Its function is as follows. Functions in the N-end rule pathway of protein degradation where it conjugates Leu, Phe and, less efficiently, Met from aminoacyl-tRNAs to the N-termini of proteins containing an N-terminal arginine or lysine. The protein is Leucyl/phenylalanyl-tRNA--protein transferase of Shewanella putrefaciens (strain CN-32 / ATCC BAA-453).